The primary structure comprises 410 residues: Arginine deiminase (410 aa).

Residue Cys-400 is the Amidino-cysteine intermediate of the active site.

Belongs to the arginine deiminase family.

It is found in the cytoplasm. The enzyme catalyses L-arginine + H2O = L-citrulline + NH4(+). It functions in the pathway amino-acid degradation; L-arginine degradation via ADI pathway; carbamoyl phosphate from L-arginine: step 1/2. This Bacillus cereus (strain G9842) protein is Arginine deiminase.